The following is a 692-amino-acid chain: Elongation factor G (692 aa).

The tr-type G domain maps to 9–284 (HMVRNIGIAA…AVVDYLPAPD (276 aa)). GTP is bound by residues 18–25 (AHIDAGKT), 82–86 (DTPGH), and 136–139 (NKMD).

Belongs to the TRAFAC class translation factor GTPase superfamily. Classic translation factor GTPase family. EF-G/EF-2 subfamily.

It is found in the cytoplasm. Catalyzes the GTP-dependent ribosomal translocation step during translation elongation. During this step, the ribosome changes from the pre-translocational (PRE) to the post-translocational (POST) state as the newly formed A-site-bound peptidyl-tRNA and P-site-bound deacylated tRNA move to the P and E sites, respectively. Catalyzes the coordinated movement of the two tRNA molecules, the mRNA and conformational changes in the ribosome. This Campylobacter curvus (strain 525.92) protein is Elongation factor G.